A 433-amino-acid chain; its full sequence is Mitochondrial inner membrane magnesium transporter MIT1 (433 aa).

Positions 257–298 (TNKLLRDMMKIKNNLQKLSNLLNALRTNIEKILNNENDMKNM) form a coiled coil. Residues 360–380 (FILLNAKISFSTLLFSISSVV) form a helical membrane-spanning segment. The Extracellular portion of the chain corresponds to 381 to 396 (TSLFGMNLKNFVEDSN). The helical transmembrane segment at 397–417 (YAFIIVSIFVSVWSIIGIYVT) threads the bilayer. Over 418–433 (KNINTLLKFFDRYNFR) the chain is Mitochondrial matrix.

Belongs to the CorA metal ion transporter (MIT) (TC 1.A.35) family.

The protein localises to the mitochondrion inner membrane. Mitochondrial inner membrane magnesium transporter required for mitochondrial magnesium homeostasis. Involved in the development of the sporozoite in the mosquito vector midgut. In Plasmodium berghei (strain Anka), this protein is Mitochondrial inner membrane magnesium transporter MIT1.